Reading from the N-terminus, the 343-residue chain is Methionine import ATP-binding protein MetN 2 (343 aa).

The 240-residue stretch at 2–241 (IEFKDVTKTF…PQQAVTKRFV (240 aa)) folds into the ABC transporter domain. Residue 38-45 (GYSGAGKS) coordinates ATP.

This sequence belongs to the ABC transporter superfamily. Methionine importer (TC 3.A.1.24) family. The complex is composed of two ATP-binding proteins (MetN), two transmembrane proteins (MetI) and a solute-binding protein (MetQ).

It localises to the cell membrane. The enzyme catalyses L-methionine(out) + ATP + H2O = L-methionine(in) + ADP + phosphate + H(+). The catalysed reaction is D-methionine(out) + ATP + H2O = D-methionine(in) + ADP + phosphate + H(+). Functionally, part of the ABC transporter complex MetNIQ involved in methionine import. Responsible for energy coupling to the transport system. This Lactiplantibacillus plantarum (strain ATCC BAA-793 / NCIMB 8826 / WCFS1) (Lactobacillus plantarum) protein is Methionine import ATP-binding protein MetN 2.